A 243-amino-acid polypeptide reads, in one-letter code: MLAEMLWPAVNMLLPRKALLVDIFFILAATNLMIAAFALGCLAFYKQLVYITIGNLTFPHQSGDEVIRAMYIPPVNDSVDFNPGFRLSWLNTLSPLSDGPYDSWSQCEICPGRFVGQKACYYVPPKTYSFQNCFFACKNISKCFYLYTPQNITDPFFDHTLRDQDIWIGTFFKKLNAALSTIDNNFDYTAWDELSVYCAYLTRRSRSTVYFTDCTTSKLCLCGQEDFTPAPFYEALTPAPVHG.

The chain crosses the membrane as a helical span at residues 23–43; the sequence is IFFILAATNLMIAAFALGCLA. The C-type lectin domain occupies 116–223; it reads GQKACYYVPP…CTTSKLCLCG (108 aa). 2 disulfide bridges follow: Cys137–Cys222 and Cys198–Cys214.

Its subcellular location is the host membrane. The chain is Putative C-type lectin protein A7 (A7) from Alcelaphine herpesvirus 1 (strain C500) (AlHV-1).